The chain runs to 364 residues: Chorismate synthase (364 aa).

Arg-48 lines the NADP(+) pocket. FMN-binding positions include 131-133, 243-244, Gly-288, 303-307, and Arg-329; these read RSS, NA, and KPTSS.

Belongs to the chorismate synthase family. In terms of assembly, homotetramer. FMNH2 is required as a cofactor.

It catalyses the reaction 5-O-(1-carboxyvinyl)-3-phosphoshikimate = chorismate + phosphate. The protein operates within metabolic intermediate biosynthesis; chorismate biosynthesis; chorismate from D-erythrose 4-phosphate and phosphoenolpyruvate: step 7/7. In terms of biological role, catalyzes the anti-1,4-elimination of the C-3 phosphate and the C-6 proR hydrogen from 5-enolpyruvylshikimate-3-phosphate (EPSP) to yield chorismate, which is the branch point compound that serves as the starting substrate for the three terminal pathways of aromatic amino acid biosynthesis. This reaction introduces a second double bond into the aromatic ring system. The sequence is that of Chorismate synthase from Brucella abortus (strain S19).